Here is a 323-residue protein sequence, read N- to C-terminus: MKPSVILYKTLPDDLLQRLEEHFSVTQVKNLRPETVSQHAEAFAQAEGLLGSSEKVDAALLEKMPKLRATSTVSVGYDNFDVEALNARRVLLMHTPTVLTETVADTVMALVLSTARRVVEVAERVKAGEWTKSIGPDWFGSDVHHKTLGIVGMGRIGMALAQRAHFGFGMPILYNARRQHPQAEERFNARYCDLDTLLQEADFVCLILPLSEETHHLFGQAQFAKMKSSAIFINAGRGPVVDEQALIAALQAGEIHAAGLDVFEHEPLAKDSPLLTLPNVVALPHIGSATHETRYNMAACAVDNLIDALNGNVEKNCVNPQVK.

Active-site residues include Arg-237 and Glu-266. Residue His-285 is the Proton donor of the active site.

Belongs to the D-isomer specific 2-hydroxyacid dehydrogenase family. GhrB subfamily. As to quaternary structure, homodimer.

The protein localises to the cytoplasm. It catalyses the reaction glycolate + NADP(+) = glyoxylate + NADPH + H(+). The catalysed reaction is (R)-glycerate + NAD(+) = 3-hydroxypyruvate + NADH + H(+). The enzyme catalyses (R)-glycerate + NADP(+) = 3-hydroxypyruvate + NADPH + H(+). Functionally, catalyzes the NADPH-dependent reduction of glyoxylate and hydroxypyruvate into glycolate and glycerate, respectively. The polypeptide is Glyoxylate/hydroxypyruvate reductase B (Klebsiella pneumoniae (strain 342)).